The chain runs to 116 residues: U11-theraphotoxin-Hhn1c (116 aa).

Positions 1-21 are cleaved as a signal peptide; that stretch reads MNTVRVTFLLVFVLAVSLGQA. Positions 22-74 are excised as a propeptide; sequence DKDENRMEMQEKTEQGKSYLDFAENLLLQKLEELEAKLLEEDSEESRNSRQKR. Residues 61 to 83 form a disordered region; it reads EEDSEESRNSRQKRCIGEGVPCD. 3 cysteine pairs are disulfide-bonded: cysteine 75/cysteine 90, cysteine 82/cysteine 95, and cysteine 89/cysteine 110.

This sequence belongs to the neurotoxin 14 (magi-1) family. 01 (HNTX-16) subfamily. Expressed by the venom gland.

It localises to the secreted. Functionally, probable ion channel inhibitor. The sequence is that of U11-theraphotoxin-Hhn1c from Cyriopagopus hainanus (Chinese bird spider).